The chain runs to 966 residues: Translation initiation factor IF-2 (966 aa).

5 stretches are compositionally biased toward basic and acidic residues: residues 99–113, 123–183, 197–212, 220–249, and 266–277; these read KRDE…EAAD, EQAR…KAEE, DASR…RVAV, AADD…EAEA, and PSERKAEEKKAE. Residues 99–382 are disordered; it reads KRDEAGADQH…NFQAPTEPVV (284 aa). The span at 304-315 shows a compositional bias: low complexity; sequence AATTTTTTATTT. The segment covering 346 to 359 has biased composition (gly residues); it reads SSGGVGGWRGGPRG. Positions 466–635 constitute a tr-type G domain; sequence PRPPVVTVMG…LLQAEVLELK (170 aa). The interval 475–482 is G1; it reads GHVDHGKT. 475–482 provides a ligand contact to GTP; sequence GHVDHGKT. A G2 region spans residues 500 to 504; that stretch reads GITQH. Positions 521–524 are G3; it reads DTPG. GTP contacts are provided by residues 521 to 525 and 575 to 578; these read DTPGH and NKID. The segment at 575 to 578 is G4; sequence NKID. The segment at 611 to 613 is G5; sequence SAK.

It belongs to the TRAFAC class translation factor GTPase superfamily. Classic translation factor GTPase family. IF-2 subfamily.

It is found in the cytoplasm. Its function is as follows. One of the essential components for the initiation of protein synthesis. Protects formylmethionyl-tRNA from spontaneous hydrolysis and promotes its binding to the 30S ribosomal subunits. Also involved in the hydrolysis of GTP during the formation of the 70S ribosomal complex. This chain is Translation initiation factor IF-2, found in Cupriavidus pinatubonensis (strain JMP 134 / LMG 1197) (Cupriavidus necator (strain JMP 134)).